Consider the following 126-residue polypeptide: Large ribosomal subunit protein uL22 (126 aa).

Belongs to the universal ribosomal protein uL22 family. As to quaternary structure, part of the 50S ribosomal subunit.

Its function is as follows. This protein binds specifically to 23S rRNA; its binding is stimulated by other ribosomal proteins, e.g. L4, L17, and L20. It is important during the early stages of 50S assembly. It makes multiple contacts with different domains of the 23S rRNA in the assembled 50S subunit and ribosome. The globular domain of the protein is located near the polypeptide exit tunnel on the outside of the subunit, while an extended beta-hairpin is found that lines the wall of the exit tunnel in the center of the 70S ribosome. The sequence is that of Large ribosomal subunit protein uL22 from Cereibacter sphaeroides (strain ATCC 17029 / ATH 2.4.9) (Rhodobacter sphaeroides).